The primary structure comprises 378 residues: Chaperone protein DnaJ (378 aa).

The region spanning 5–69 (EYYDRLGVSK…QKRAAYDQYG (65 aa)) is the J domain. Residues 134–216 (GVEKEVSYNR…CHGTGHEKQA (83 aa)) form a CR-type zinc finger. 8 residues coordinate Zn(2+): C147, C150, C164, C167, C190, C193, C204, and C207. CXXCXGXG motif repeat units lie at residues 147-154 (CGTCLGSG), 164-171 (CRKCHGSG), 190-197 (CDICHGSG), and 204-211 (CQTCHGTG).

It belongs to the DnaJ family. Homodimer. Zn(2+) is required as a cofactor.

The protein localises to the cytoplasm. Its function is as follows. Participates actively in the response to hyperosmotic and heat shock by preventing the aggregation of stress-denatured proteins and by disaggregating proteins, also in an autonomous, DnaK-independent fashion. Unfolded proteins bind initially to DnaJ; upon interaction with the DnaJ-bound protein, DnaK hydrolyzes its bound ATP, resulting in the formation of a stable complex. GrpE releases ADP from DnaK; ATP binding to DnaK triggers the release of the substrate protein, thus completing the reaction cycle. Several rounds of ATP-dependent interactions between DnaJ, DnaK and GrpE are required for fully efficient folding. Also involved, together with DnaK and GrpE, in the DNA replication of plasmids through activation of initiation proteins. The polypeptide is Chaperone protein DnaJ (Streptococcus pyogenes).